The following is a 66-amino-acid chain: uncharacterized protein (66 aa).

One can recognise an HTH cro/C1-type domain in the interval 5–59; the sequence is VKELRARFGYSQEKLGETVGVTRQTVAAIEKGDYVPSLLLALKICKAFSMKMEDV. The H-T-H motif DNA-binding region spans 16-35; the sequence is QEKLGETVGVTRQTVAAIEK.

This is an uncharacterized protein from Bacillus subtilis (strain 168).